A 237-amino-acid chain; its full sequence is Ribonuclease PH (237 aa).

Phosphate-binding positions include R86 and 124–126; that span reads GTR.

It belongs to the RNase PH family. As to quaternary structure, homohexameric ring arranged as a trimer of dimers.

The enzyme catalyses tRNA(n+1) + phosphate = tRNA(n) + a ribonucleoside 5'-diphosphate. Its function is as follows. Phosphorolytic 3'-5' exoribonuclease that plays an important role in tRNA 3'-end maturation. Removes nucleotide residues following the 3'-CCA terminus of tRNAs; can also add nucleotides to the ends of RNA molecules by using nucleoside diphosphates as substrates, but this may not be physiologically important. Probably plays a role in initiation of 16S rRNA degradation (leading to ribosome degradation) during starvation. The polypeptide is Ribonuclease PH (Methylocella silvestris (strain DSM 15510 / CIP 108128 / LMG 27833 / NCIMB 13906 / BL2)).